Consider the following 1266-residue polypeptide: MALFRKLFYRKPPDGLLEICDRVFVFDCCFSTDSWEEENYKVYMAGVVNQLQEHFPEASSLVFNFREVGTRSVMADVLSEHGLTIMDYPRHYEGCSLLPVEVMHHFLRSSESWLSLGPNNLLLMHCESGAWPVLAFMLAALLIYRKQYSGESKTLDMIYKQAPRELLRLFSPLNPIPSQLRYLQYVSRRNLVSEWPPLDRALTMDCVILRFIPDVSGQGGFRPMFRIYGQDPFFVDDKKPKLLYTTPKKGKHLRVYKQAECELVKIDINCHVQGDIVIECLSLNDDMEREVMMFRVVFNTAFIRSNILMLNRDEVDTLWHIKEFPKGFRVELLFSDMDAASSVDLMNFSSLEEKDGLPIEVFSKVHEFFNQVDWVDQTDATRNMFQQLAIANAVQEGLDGNSSPRLQGLSPKSIHDIMKHAAIENSAKFKLSSMSEVETIDTPEKPPTDSVKKFIAEDVHSVLQINNQEQNASEDATKLLHQESPSLKLVHHSATVKPLVDDSKSPENAEENFPKSPSAHDGKAISFSPPTPSPPHPVRPQLAQAGAPPPPPPLPAAASKPSEQLQHSVVQATEPLSQGNSWMSLAGSTFQTVPNEKNLITLPPTPPLASTSHASPEPSSKTTNSLLLSPQASPATPTNPSKTVSVDFFGAATSPHLGASDNVASNLGQPARSPPPISNSDKKPALPRPPPPPPPPPMQHSTVTKVPPPPPPAPPAPPTPIVHTSSPPPPPPPPPPPAPPTPQSNGISAMKSSPPAPPAPPRLPTHSASPPPPTAPPPPPLGQTRAPSAPPPPPPKLGTKLSPSGPNVPPTPALPTGPLSSGKGRMLRVNLKNSPAKKLKPYHWLKLTRAVNGSLWAETQMSSEASKAPDIDMTELESLFSASAPEQAGKSRLDSSRGPKPEKVQLIEHRRAYNCEIMLSKVKVPLQDLTNSVLNLEESALDADQVENLIKFCPTREEMELLKGYTGDKDKLGKCELFFLEMMKVPRVETKLRVFSFKMQFTSQISELRNSLGVVNSAAEQVKNSEKFKRIMQTILSLGNALNQGTARGAAVGFKLDSLPKLSETRARNNRMTLMHYLCKILAEKIPEVLDFTKELSSLEPATKIQLKFLAEEMQAINKGLEKVVQELSLSENDGPISHNFNKILKEFLHYAEAEVRSLASLYSGVGRNVDGLILYFGEDPAKCPFEQVVSTLLNFVRLFNRAHEENGKQLEAEAKKNAAEKEKPKTGGLDTEIKKPLNEEVKEEKTKTSGLGKEMSDRLKERTAP.

Positions 9–193 (YRKPPDGLLE…QYVSRRNLVS (185 aa)) constitute a Phosphatase tensin-type domain. Catalysis depends on cysteine 126, which acts as the Phosphocysteine intermediate. Residues 199–337 (DRALTMDCVI…FRVELLFSDM (139 aa)) enclose the C2 tensin-type domain. Disordered regions lie at residues 497–568 (KPLV…LQHS), 597–825 (KNLI…GKGR), 881–902 (SASA…PKPE), and 1210–1266 (QLEA…RTAP). The span at 529–538 (PPTPSPPHPV) shows a compositional bias: pro residues. Residues 617-644 (EPSSKTTNSLLLSPQASPATPTNPSKTV) are compositionally biased toward polar residues. Composition is skewed to pro residues over residues 686-698 (LPRP…PPPM), 706-742 (VPPP…PPTP), 754-781 (PPAP…PPPL), and 806-815 (PNVPPTPALP). The 398-residue stretch at 829-1226 (VNLKNSPAKK…KNAAEKEKPK (398 aa)) folds into the FH2 domain. Basic and acidic residues-rich tracts occupy residues 889-902 (GKSR…PKPE), 1210-1248 (QLEA…EKTK), and 1255-1266 (EMSDRLKERTAP).

The protein belongs to the formin-like family. Class-II subfamily.

This Arabidopsis thaliana (Mouse-ear cress) protein is Formin-like protein 13 (FH13).